The following is a 256-amino-acid chain: tRNA pseudouridine synthase A 1 (256 aa).

Asp53 acts as the Nucleophile in catalysis. Residue Tyr111 participates in substrate binding.

This sequence belongs to the tRNA pseudouridine synthase TruA family. Homodimer.

The catalysed reaction is uridine(38/39/40) in tRNA = pseudouridine(38/39/40) in tRNA. Formation of pseudouridine at positions 38, 39 and 40 in the anticodon stem and loop of transfer RNAs. This Protochlamydia amoebophila (strain UWE25) protein is tRNA pseudouridine synthase A 1.